A 329-amino-acid chain; its full sequence is Probable carboxylesterase 8 (329 aa).

Residues 73–75 (HGG) carry the Involved in the stabilization of the negatively charged intermediate by the formation of the oxyanion hole motif. Residues serine 161, aspartate 264, and histidine 294 contribute to the active site.

It belongs to the 'GDXG' lipolytic enzyme family. As to expression, expressed in leaves, stems, flowers and siliques.

The catalysed reaction is a carboxylic ester + H2O = an alcohol + a carboxylate + H(+). Its function is as follows. Carboxylesterase acting on esters with varying acyl chain length. The chain is Probable carboxylesterase 8 (CXE8) from Arabidopsis thaliana (Mouse-ear cress).